A 673-amino-acid chain; its full sequence is Hemocyanin subunit C (673 aa).

The N-terminal stretch at 1–20 is a signal peptide; it reads MGAWKVWTFFAIALVVAVKA. Cu cation contacts are provided by histidine 207, histidine 211, and histidine 237. Asparagine 323 is a glycosylation site (N-linked (GlcNAc...) asparagine). Residues histidine 358, histidine 362, and histidine 398 each coordinate Cu cation. Cysteine 568 and cysteine 616 are joined by a disulfide.

The protein belongs to the tyrosinase family. Hemocyanin subfamily. 36-chain polymer consisting of 6 hexamers, each of which includes 4 different chains, A, B, C and D. In terms of tissue distribution, hemolymph.

It is found in the secreted. It localises to the extracellular space. Functionally, hemocyanins are copper-containing oxygen carriers occurring freely dissolved in the hemolymph of many mollusks and arthropods. In Scutigera coleoptrata (House centipede), this protein is Hemocyanin subunit C (HCC).